The primary structure comprises 299 residues: Oxygen-dependent coproporphyrinogen-III oxidase (299 aa).

Serine 92 serves as a coordination point for substrate. Residues histidine 96 and histidine 106 each contribute to the a divalent metal cation site. The active-site Proton donor is the histidine 106. Position 108 to 110 (108 to 110) interacts with substrate; the sequence is NVR. Histidine 145 and histidine 175 together coordinate a divalent metal cation. Residues 240–275 form an important for dimerization region; that stretch reads YVEFNLVWDRGTLFGLQTGGRTESILMSMPPLVRWE. 258–260 provides a ligand contact to substrate; sequence GGR.

Belongs to the aerobic coproporphyrinogen-III oxidase family. Homodimer. A divalent metal cation serves as cofactor.

The protein resides in the cytoplasm. It catalyses the reaction coproporphyrinogen III + O2 + 2 H(+) = protoporphyrinogen IX + 2 CO2 + 2 H2O. It functions in the pathway porphyrin-containing compound metabolism; protoporphyrin-IX biosynthesis; protoporphyrinogen-IX from coproporphyrinogen-III (O2 route): step 1/1. In terms of biological role, involved in the heme biosynthesis. Catalyzes the aerobic oxidative decarboxylation of propionate groups of rings A and B of coproporphyrinogen-III to yield the vinyl groups in protoporphyrinogen-IX. The protein is Oxygen-dependent coproporphyrinogen-III oxidase of Klebsiella pneumoniae (strain 342).